A 137-amino-acid polypeptide reads, in one-letter code: UPF0148 protein MJ0890 (137 aa).

It belongs to the UPF0148 family.

This chain is UPF0148 protein MJ0890, found in Methanocaldococcus jannaschii (strain ATCC 43067 / DSM 2661 / JAL-1 / JCM 10045 / NBRC 100440) (Methanococcus jannaschii).